The following is a 499-amino-acid chain: MAPIPGVMPIGNYVSLYVMLPLGVVNADNVFPDKEKVEDELKQVKAGGCDGVMVDVWWGIIEAKGPKQYDWSAYRELFQLVKKCGLKIQAIMSFHQCGGNVGDAVFIPIPQWILQIGDKNPDIFYTNRAGNRNQEYLSLGVDNQRLFQGRTALEMYRDFMESFRDNMADFLKAGDIVDIEVGCGAAGELRYPSYPETQGWVFPGIGEFQCYDKYMVADWKEAVKQAGNADWEMPGKGAGTYNDTPDKTEFFRPNGTYKTDMGKFFLTWYSNKLIIHGDQVLEEANKVFVGLRVNIAAKVSGIHWWYNHVSHAAELTAGFYNVAGRDGYRPIARMLARHHATLNFTCLEMRDSEQPAEAKSAPQELVQQVLSSGWKEYIDVAGENALPRYDATAYNQMLLNVRPNGVNLNGPPKLKMSGLTYLRLSDDLLQTDNFELFKKFVKKMHADLDPSPNAISPAVLERSNSAITIDELMEATKGSRPFPWYDVTDMPVDGSNPFD.

Positions 55, 95, and 103 each coordinate substrate. The Proton donor role is filled by glutamate 188. Residues lysine 298, histidine 303, and threonine 345 each coordinate substrate. Glutamate 383 acts as the Proton acceptor in catalysis. Residues 384-385 (NA) and arginine 423 contribute to the substrate site.

This sequence belongs to the glycosyl hydrolase 14 family. In terms of assembly, homotetramer.

It carries out the reaction Hydrolysis of (1-&gt;4)-alpha-D-glucosidic linkages in polysaccharides so as to remove successive maltose units from the non-reducing ends of the chains.. The sequence is that of Beta-amylase (BMY1) from Ipomoea batatas (Sweet potato).